A 219-amino-acid chain; its full sequence is DnaJ homolog subfamily C member 30, mitochondrial (219 aa).

Residues 1–38 constitute a mitochondrion transit peptide; the sequence is MAAARCLGWTLSPLWRWWQVRGLPPSSATGLCSRGRTY. Positions 42–107 constitute a J domain; sequence ALYELLGVPS…ILRRKYDRGL (66 aa). A disordered region spans residues 109 to 148; the sequence is SDQDLRGPGVKPSKTPVADPAPPRPPPYTPRAPGGSRASP. The segment covering 127-138 has biased composition (pro residues); the sequence is DPAPPRPPPYTP. The helical transmembrane segment at 202-218 threads the bilayer; sequence ATFFVVLFLIFVFVGFR.

In terms of assembly, associates with the ATP synthase complex. Interacts with MT-ATP6; interaction is direct. Interacts with ATP5MC2; interaction is direct. As to expression, in brain, expressed in gray matter structures.

The protein localises to the mitochondrion inner membrane. Functionally, mitochondrial protein enriched in neurons that acts as a regulator of mitochondrial respiration. Associates with the ATP synthase complex and facilitates ATP synthesis. May be a chaperone protein involved in the turnover of the subunits of mitochondrial complex I N-module. It facilitates the degradation of N-module subunits damaged by oxidative stress, and contributes to complex I functional efficiency. The sequence is that of DnaJ homolog subfamily C member 30, mitochondrial from Mus musculus (Mouse).